The chain runs to 590 residues: MKLKVYADRMSQPSRAVLIFCKVNEIQFDEILIYLANRQQLSPEFKDINPMGKVPAIVDGKLKLSESHAILIYLSSAYPSVVDHWYPTDLSKRARIHSVLDWHHTNLRPGAAGYVLNSVLGPALGLPLNPKAAAEAEQLLTKSLTTLDTFWLKGNAMFLLGSNQPSIADLSLVCELTQLQVLDDKDRLRLLSPHKNVEQWIENTRKATMPHFDEVHEVLFRAKDRCQKQREMATASKPGPQSKIIQFSTIGEKSDDPNLVQNTTDRRKHRRKWSRAEDAILISAWLNTSKDPIVDNEHKACAFWKRIGAYFNNSASLANLPKREPSHCKQRWSKLNDKVCKFVGCYDQALNQRSSGQSEDDVFQVAYQVYTNNYKSNFTLEHAWRELRHSKKWCSLYPFENSKGGGSSKRTKLNNGDRVYSSSSNPESVPIALDEEEQVMDLPLGVKSSKQKEKKVATIITIEEREADSGSRLENLWVLDEEEQVMDRPLGVKSLEQKENKVAPKPTIEEREAADSRSRLENLWALKEKEEREADSRSRLENLWALKEKDIEEQKKLTRMEVLKSLLGRTTDQLSEKEDILKNKLIDEML.

The 82-residue stretch at 1-82 (MKLKVYADRM…YLSSAYPSVV (82 aa)) folds into the GST N-terminal domain. Glutathione contacts are provided by residues 11–12 (SQ), 40–41 (QL), 53–54 (KV), and 66–67 (ES). The region spanning 89–232 (DLSKRARIHS…KDRCQKQREM (144 aa)) is the GST C-terminal domain. The Myb-like domain maps to 265–336 (DRRKHRRKWS…HCKQRWSKLN (72 aa)). The tract at residues 402-427 (SKGGGSSKRTKLNNGDRVYSSSSNPE) is disordered.

This sequence belongs to the GST superfamily. Theta family.

Its subcellular location is the nucleus. It carries out the reaction RX + glutathione = an S-substituted glutathione + a halide anion + H(+). In terms of biological role, may be involved in the conjugation of reduced glutathione to a wide number of exogenous and endogenous hydrophobic electrophiles and have a detoxification role against certain herbicides. In Arabidopsis thaliana (Mouse-ear cress), this protein is Glutathione S-transferase T3 (GSTT3).